A 148-amino-acid chain; its full sequence is Glutamyl-tRNA(Gln) amidotransferase subunit C, mitochondrial (148 aa).

This sequence belongs to the GatC family. As to quaternary structure, subunit of the heterotrimeric GatCAB amidotransferase (AdT) complex, composed of A, B and C subunits.

The protein resides in the mitochondrion. The enzyme catalyses L-glutamyl-tRNA(Gln) + L-glutamine + ATP + H2O = L-glutaminyl-tRNA(Gln) + L-glutamate + ADP + phosphate + H(+). Allows the formation of correctly charged Gln-tRNA(Gln) through the transamidation of misacylated Glu-tRNA(Gln) in the mitochondria. The reaction takes place in the presence of glutamine and ATP through an activated gamma-phospho-Glu-tRNA(Gln). In Drosophila pseudoobscura pseudoobscura (Fruit fly), this protein is Glutamyl-tRNA(Gln) amidotransferase subunit C, mitochondrial.